The primary structure comprises 171 residues: Ribulose bisphosphate carboxylase small subunit, chloroplastic (171 aa).

A chloroplast-targeting transit peptide spans 1 to 50 (MATGAGAGAATVVSAFTGLKSTAQFPSSFKMSNAAAEWEQKTTSNGGRVR).

The protein belongs to the RuBisCO small chain family. In terms of assembly, heterohexadecamer of 8 large and 8 small subunits.

Its subcellular location is the plastid. It is found in the chloroplast. In terms of biological role, ruBisCO catalyzes two reactions: the carboxylation of D-ribulose 1,5-bisphosphate, the primary event in carbon dioxide fixation, as well as the oxidative fragmentation of the pentose substrate. Both reactions occur simultaneously and in competition at the same active site. Although the small subunit is not catalytic it is essential for maximal activity. In Pinus thunbergii (Japanese black pine), this protein is Ribulose bisphosphate carboxylase small subunit, chloroplastic.